Consider the following 280-residue polypeptide: Phosphonates import ATP-binding protein PhnC (280 aa).

The ABC transporter domain occupies 4 to 239; that stretch reads ITVTNLHKSY…VIDDIYGNIQ (236 aa). 36–43 contacts ATP; sequence GESGAGKS. Residues 246 to 280 form a disordered region; it reads GDDANADVAPTTSSDGGTDAAGGPDQQPASDPHLS.

It belongs to the ABC transporter superfamily. Phosphonates importer (TC 3.A.1.9.1) family. The complex is composed of two ATP-binding proteins (PhnC), two transmembrane proteins (PhnE) and a solute-binding protein (PhnD).

The protein resides in the cell membrane. The catalysed reaction is phosphonate(out) + ATP + H2O = phosphonate(in) + ADP + phosphate + H(+). Functionally, part of the ABC transporter complex PhnCDE involved in phosphonates import. Responsible for energy coupling to the transport system. This is Phosphonates import ATP-binding protein PhnC from Halobacterium salinarum (strain ATCC 700922 / JCM 11081 / NRC-1) (Halobacterium halobium).